The primary structure comprises 274 residues: 23S rRNA (adenosine(1067)-2'-O)-methyltransferase (274 aa).

Residues R165, L195, 218 to 220 (GSE), 238 to 240 (IPM), and 247 to 252 (LNVSVS) each bind S-adenosyl-L-methionine.

This sequence belongs to the class IV-like SAM-binding methyltransferase superfamily. RNA methyltransferase TsnR/AvirB family. As to quaternary structure, homodimer.

The enzyme catalyses adenosine(1067) in 23S rRNA + S-adenosyl-L-methionine = 2'-O-methyladenosine(1067) in 23S rRNA + S-adenosyl-L-homocysteine + H(+). Specifically methylates the adenosine-1067 in 23S ribosomal RNA. Confers resistance to antibiotic nosiheptide. In Streptomyces actuosus, this protein is 23S rRNA (adenosine(1067)-2'-O)-methyltransferase.